Here is a 296-residue protein sequence, read N- to C-terminus: 4-hydroxy-tetrahydrodipicolinate synthase (296 aa).

Position 47 (T47) interacts with pyruvate. Y135 (proton donor/acceptor) is an active-site residue. K164 serves as the catalytic Schiff-base intermediate with substrate. I207 lines the pyruvate pocket.

It belongs to the DapA family. In terms of assembly, homotetramer; dimer of dimers.

The protein resides in the cytoplasm. The enzyme catalyses L-aspartate 4-semialdehyde + pyruvate = (2S,4S)-4-hydroxy-2,3,4,5-tetrahydrodipicolinate + H2O + H(+). Its pathway is amino-acid biosynthesis; L-lysine biosynthesis via DAP pathway; (S)-tetrahydrodipicolinate from L-aspartate: step 3/4. Its function is as follows. Catalyzes the condensation of (S)-aspartate-beta-semialdehyde [(S)-ASA] and pyruvate to 4-hydroxy-tetrahydrodipicolinate (HTPA). This Karelsulcia muelleri (strain GWSS) (Sulcia muelleri) protein is 4-hydroxy-tetrahydrodipicolinate synthase.